Reading from the N-terminus, the 261-residue chain is uncharacterized protein (261 aa).

Belongs to the FwdC/FmdC family.

This is an uncharacterized protein from Methanocaldococcus jannaschii (strain ATCC 43067 / DSM 2661 / JAL-1 / JCM 10045 / NBRC 100440) (Methanococcus jannaschii).